A 194-amino-acid chain; its full sequence is uncharacterized protein (194 aa).

This is an uncharacterized protein from Aquifex aeolicus (strain VF5).